A 195-amino-acid chain; its full sequence is Early light-induced protein 1, chloroplastic (195 aa).

The transit peptide at methionine 1 to methionine 46 directs the protein to the chloroplast. A disordered region spans residues methionine 46 to lysine 81. Residues serine 56–leucine 68 are compositionally biased toward low complexity. The span at proline 69–lysine 79 shows a compositional bias: pro residues. A run of 3 helical transmembrane segments spans residues leucine 104–leucine 124, glycine 131–phenylalanine 151, and phenylalanine 175–valine 195.

This sequence belongs to the ELIP/psbS family.

It localises to the plastid. Its subcellular location is the chloroplast thylakoid membrane. Prevents excess accumulation of free chlorophyll by inhibiting the entire chlorophyll biosynthesis pathway (e.g. 5-aminolevulinate synthesis and Mg-protoporphyrin IX chelatase activity), and hence prevent photooxidative stress. Probably involved in the integration of pigments into the mature light-harvesting pigment-protein complexes. Light-harvesting chlorophyll (LHC) a/b-binding protein required to ensure a high rate of chlorophyll accumulation during deetiolation in continuous high light. Involved in seed germination. May fulfill a photoprotective functions. In Arabidopsis thaliana (Mouse-ear cress), this protein is Early light-induced protein 1, chloroplastic.